A 363-amino-acid polypeptide reads, in one-letter code: Probable cinnamyl alcohol dehydrogenase 6 (363 aa).

Cysteine 51 serves as a coordination point for Zn(2+). Serine 53 contributes to the NADP(+) binding site. Zn(2+) contacts are provided by histidine 73, glutamate 74, cysteine 104, cysteine 107, cysteine 110, cysteine 118, and cysteine 167. NADP(+) contacts are provided by residues serine 171, 192–197 (GLGGLG), 215–220 (SSTTGK), threonine 255, glycine 279, and 302–304 (SGI).

The protein belongs to the zinc-containing alcohol dehydrogenase family. Homodimer. Zn(2+) is required as a cofactor. Expressed in the primary and lateral roots, and root caps. Expressed in the hypocotyl, cotyledon veins and hydathodes. In stems, expressed in the vascular cambium, interfascicular cambium and developing xylem. Expressed in the style, anthers, stamen filaments, vascular tissues of sepals, stigmatic regions in flowers, and abscission and style regions of siliques.

The enzyme catalyses (E)-cinnamyl alcohol + NADP(+) = (E)-cinnamaldehyde + NADPH + H(+). The catalysed reaction is (E)-coniferol + NADP(+) = (E)-coniferaldehyde + NADPH + H(+). It catalyses the reaction (E)-sinapyl alcohol + NADP(+) = (E)-sinapaldehyde + NADPH + H(+). It carries out the reaction (E)-4-coumaroyl alcohol + NADP(+) = (E)-4-coumaraldehyde + NADPH + H(+). The enzyme catalyses (E)-caffeyl alcohol + NADP(+) = (E)-caffeyl aldehyde + NADPH + H(+). It participates in aromatic compound metabolism; phenylpropanoid biosynthesis. Functionally, involved in lignin biosynthesis. Catalyzes the final step specific for the production of lignin monomers. Catalyzes the NADPH-dependent reduction of coniferaldehyde, 5-hydroxyconiferaldehyde, sinapaldehyde, 4-coumaraldehyde and caffeyl aldehyde to their respective alcohols. This chain is Probable cinnamyl alcohol dehydrogenase 6 (CAD6), found in Arabidopsis thaliana (Mouse-ear cress).